We begin with the raw amino-acid sequence, 534 residues long: MEGVNSSSSISDLDELARLLDRPRVNIERKRSFDERSFSEMGIFDNVNSPGGWETPVSSARNSFEPHPMVAEAWDALRRSLVYFRGQPVGTIAAYDHATEEVLNYDQVFVRDFVPSALAFLMNGEPDIVKNFLLKTIQIQGREKRIDRFKLGEGAMPASFKVIHDPIKETDSINADFGESAIGRVAPVDSGFWWIILLRAYTKSTGDTSLAETSECQKGMRLILSLCLSEGFDTFPTLLCADGCSMIDRRMGVYGYPIEIQALFFMALRSAMSMLKHDAEGKEFMERIVKRLHALSFHMRSYFWLDFQQLNDIYRYKTEEYSHTAVNKFNVIPDSIPEWVFDFMPLRGGYFIGNVSPARMDFRWFALGNCVAILASLATPEQSASIMDLIEERWEELVGEMPVKICHPAIESHEWRIVTGCDPKNTRWSYHNGGSWPVLLWLLTAACIKTGRPQIARRAIDLAEARLLKDGWPEYYDGKSGRFIGKQARKFQTWSIAGYLVAKMLLEDPSHLGMISLEEDKQTKPVIKRSYSWT.

Phosphoserine is present on residues serine 7 and serine 37. Phosphothreonine is present on threonine 55. Phosphoserine is present on serine 532.

This sequence belongs to the glycosyl hydrolase 100 family.

It catalyses the reaction Hydrolysis of terminal non-reducing beta-D-fructofuranoside residues in beta-D-fructofuranosides.. Invertase that cleaves sucrose into glucose and fructose. This chain is Probable alkaline/neutral invertase D, found in Arabidopsis thaliana (Mouse-ear cress).